Consider the following 173-residue polypeptide: 2-C-methyl-D-erythritol 2,4-cyclodiphosphate synthase (173 aa).

A divalent metal cation-binding residues include aspartate 17 and histidine 19. Residues 17-19 (DVH) and 49-50 (HS) contribute to the 4-CDP-2-C-methyl-D-erythritol 2-phosphate site. Histidine 57 contributes to the a divalent metal cation binding site. Residues 76–80 (FPNTD), 147–150 (TTTE), and arginine 157 contribute to the 4-CDP-2-C-methyl-D-erythritol 2-phosphate site.

This sequence belongs to the IspF family. As to quaternary structure, homotrimer. A divalent metal cation serves as cofactor.

The enzyme catalyses 4-CDP-2-C-methyl-D-erythritol 2-phosphate = 2-C-methyl-D-erythritol 2,4-cyclic diphosphate + CMP. Its pathway is isoprenoid biosynthesis; isopentenyl diphosphate biosynthesis via DXP pathway; isopentenyl diphosphate from 1-deoxy-D-xylulose 5-phosphate: step 4/6. In terms of biological role, involved in the biosynthesis of isopentenyl diphosphate (IPP) and dimethylallyl diphosphate (DMAPP), two major building blocks of isoprenoid compounds. Catalyzes the conversion of 4-diphosphocytidyl-2-C-methyl-D-erythritol 2-phosphate (CDP-ME2P) to 2-C-methyl-D-erythritol 2,4-cyclodiphosphate (ME-CPP) with a corresponding release of cytidine 5-monophosphate (CMP). In Ehrlichia ruminantium (strain Gardel), this protein is 2-C-methyl-D-erythritol 2,4-cyclodiphosphate synthase.